We begin with the raw amino-acid sequence, 89 residues long: Large ribosomal subunit protein bL27 (89 aa).

The interval 1–23 (MAHKKAGGSSRNGRDSAGKRLGI) is disordered.

Belongs to the bacterial ribosomal protein bL27 family.

This is Large ribosomal subunit protein bL27 from Rhodopseudomonas palustris (strain BisA53).